A 340-amino-acid chain; its full sequence is GTPase Obg (340 aa).

The Obg domain occupies 1–158 (MSFIDEAKIY…KHIILKLKII (158 aa)). The OBG-type G domain maps to 159–325 (SDVGIIGLPN…LSTLIKQIHK (167 aa)). Residues 165-172 (GLPNAGKS), 190-194 (FTTLE), 211-214 (DIPG), 278-281 (NKSD), and 306-308 (SSI) each bind GTP. Mg(2+) contacts are provided by serine 172 and threonine 192.

Belongs to the TRAFAC class OBG-HflX-like GTPase superfamily. OBG GTPase family. In terms of assembly, monomer. It depends on Mg(2+) as a cofactor.

The protein resides in the cytoplasm. In terms of biological role, an essential GTPase which binds GTP, GDP and possibly (p)ppGpp with moderate affinity, with high nucleotide exchange rates and a fairly low GTP hydrolysis rate. Plays a role in control of the cell cycle, stress response, ribosome biogenesis and in those bacteria that undergo differentiation, in morphogenesis control. This chain is GTPase Obg, found in Ehrlichia canis (strain Jake).